A 1050-amino-acid chain; its full sequence is TSC22 domain family protein 1 (1050 aa).

A required for interaction with TGFBR1 and promotion of TGF-beta signaling region spans residues 1–99 (MHQPPESTAA…SQAQLQGQPL (99 aa)). Disordered regions lie at residues 22–111 (MAHP…KKSG), 126–285 (ISSN…VSSA), 445–479 (QTPT…SVGS), 511–531 (DFSS…VQLQ), 581–609 (LAQP…QLQY), 720–740 (VQPP…PPSS), 795–847 (QLPT…GSLV), and 879–919 (SLAQ…VSDG). Residues 38 to 55 (ASALSAAGTGVSGAAPSS) are compositionally biased toward low complexity. A compositionally biased stretch (pro residues) spans 58 to 71 (FPPPSSLLQPPPPA). Residues 85 to 97 (SLNLLSQAQLQGQ) are compositionally biased toward low complexity. Positions 134–143 (EDTESYDDLD) are enriched in acidic residues. Positions 217–241 (HPHHLHHHHHIHHGHHLHHGHHHSS) are enriched in basic residues. Ser-265 carries the phosphoserine modification. The span at 458 to 476 (TSGSSVSSSVSTLSHYTES) shows a compositional bias: low complexity. The segment covering 586–603 (LPYPQPAPPVQTPLPGAP) has biased composition (pro residues). The span at 906-919 (LSGDSGGVSAVSDG) shows a compositional bias: low complexity. Residues 983 to 1004 (LKEQIKELIEKNSQLEQENNLL) form a leucine-zipper region. Residues 1015–1050 (QFQAQLQTGSPPATTQPQGTTQPPAQPASQGSGSTA) are disordered. Positions 1021 to 1050 (QTGSPPATTQPQGTTQPPAQPASQGSGSTA) are enriched in low complexity.

The protein belongs to the TSC-22/Dip/Bun family. As to quaternary structure, forms homodimers. Forms heterodimers. Component of a complex composed of TSC22D1 (via N-terminus), TGFBR1 and TGFBR2; the interaction between TSC22D1 and TGFBR1 is inhibited by SMAD7 and promoted by TGFB1. Interacts with SMAD7; the interaction requires TGF-beta and the interaction is inhibited by TGFBR1. Interacts with TPT1/fortilin; interaction results in the destabilization of TSC22D1 protein and prevents TSC22D1-mediated apoptosis. Interacts with SMAD4 (via N-terminus). Interacts with ACVRL1/ALK1, ACVR1/ALK2, BMPR1A/ALK3, ACVR1B/ALK4, BMPR1B/ALK6, ACVR2A/ACTRII, and BMPR2. Interacts with SMAD6. Interacts with TFE3; the interaction is enhanced in the presence of TGF-beta. Forms a heterodimer with TSC22D4/THG1. In terms of assembly, forms a heterodimer with TSC22D4/THG1. Interacts with histone H1-2. Interacts with GNL3. Ubiquitously expressed, abundantly expressed in testis, ovary, uterus, and lung. Expressed in cardiomyocytes.

It localises to the cytoplasm. The protein localises to the nucleus. The protein resides in the cell membrane. It is found in the mitochondrion. Its function is as follows. Transcriptional repressor. Acts on the C-type natriuretic peptide (CNP) promoter. Acts to promote CASP3-mediated apoptosis. Positively regulates TGF-beta signaling by interacting with SMAD7 which inhibits binding of SMAD7 to TGFBR1, preventing recruitment of SMURF ubiquitin ligases to TGFBR1 and inhibiting SMURF-mediated ubiquitination and degradation of TGFBR1. Contributes to enhancement of TGF-beta signaling by binding to and modulating the transcription activator activity of SMAD4. Promotes TGF-beta-induced transcription of COL1A2; via its interaction with TFE3 at E-boxes in the gene proximal promoter. Plays a role in the repression of hematopoietic precursor cell growth. Promotes IL2 deprivation-induced apoptosis in T-lymphocytes, via repression of TSC22D3/GILZ transcription and activation of the caspase cascade. In terms of biological role, may act to negatively regulate TGFB3 signaling and thereby inhibit cell death in mammary gland cells. Positively regulates cell death in response to TGFB3 during mammary gland involution. In Rattus norvegicus (Rat), this protein is TSC22 domain family protein 1.